Consider the following 226-residue polypeptide: Cytochrome c biogenesis ATP-binding export protein CcmA (226 aa).

Residues 19–226 enclose the ABC transporter domain; the sequence is LRANDLAFSR…LGGAHALPPA (208 aa). ATP is bound at residue 51-58; that stretch reads GPNGSGKS.

This sequence belongs to the ABC transporter superfamily. CcmA exporter (TC 3.A.1.107) family. In terms of assembly, the complex is composed of two ATP-binding proteins (CcmA) and two transmembrane proteins (CcmB).

It localises to the cell inner membrane. It catalyses the reaction heme b(in) + ATP + H2O = heme b(out) + ADP + phosphate + H(+). Part of the ABC transporter complex CcmAB involved in the biogenesis of c-type cytochromes; once thought to export heme, this seems not to be the case, but its exact role is uncertain. Responsible for energy coupling to the transport system. The sequence is that of Cytochrome c biogenesis ATP-binding export protein CcmA from Cupriavidus pinatubonensis (strain JMP 134 / LMG 1197) (Cupriavidus necator (strain JMP 134)).